The following is a 931-amino-acid chain: Valine--tRNA ligase (931 aa).

The 'HIGH' region signature appears at 43–53; sequence PNVTGALHIGH. Residues 351-370 are disordered; that stretch reads IPHTDKDGNAHDAEPRTIQT. Basic and acidic residues predominate over residues 353–365; sequence HTDKDGNAHDAEP. Residues 552-556 carry the 'KMSKS' region motif; it reads KMSKS. Lys555 is a binding site for ATP. Residues 691-717 form a disordered region; the sequence is LQGRGLGEGDEAVPAPADGPLSPALSP. A coiled-coil region spans residues 864 to 930; sequence VIDIAAERER…DRLSAALARL (67 aa).

It belongs to the class-I aminoacyl-tRNA synthetase family. ValS type 1 subfamily. Monomer.

Its subcellular location is the cytoplasm. It carries out the reaction tRNA(Val) + L-valine + ATP = L-valyl-tRNA(Val) + AMP + diphosphate. Catalyzes the attachment of valine to tRNA(Val). As ValRS can inadvertently accommodate and process structurally similar amino acids such as threonine, to avoid such errors, it has a 'posttransfer' editing activity that hydrolyzes mischarged Thr-tRNA(Val) in a tRNA-dependent manner. This Sphingopyxis alaskensis (strain DSM 13593 / LMG 18877 / RB2256) (Sphingomonas alaskensis) protein is Valine--tRNA ligase.